We begin with the raw amino-acid sequence, 648 residues long: Replication protein E1 (648 aa).

The Nuclear localization signal signature appears at 83-85; that stretch reads KRK. Phosphoserine; by host occurs at positions 89, 93, and 107. The Nuclear export signal signature appears at 106-115; sequence ISPRLDAIQL. The segment at 151-186 is disordered; the sequence is YGEPENGCGGGGDGREKEGEGQVHTEVHTESEIEQH. Residues 163–185 show a composition bias toward basic and acidic residues; that stretch reads DGREKEGEGQVHTEVHTESEIEQ. The DNA-binding region stretch occupies residues 184-352; that stretch reads EQHTGTTRVL…QTIVEHGLAD (169 aa). The SF3 helicase domain occupies 451 to 601; sequence IEFISFLSKL…FPFDSNGNAV (151 aa). 477 to 484 contributes to the ATP binding site; it reads GPPDTGKS. Residue Lys-558 forms a Glycyl lysine isopeptide (Lys-Gly) (interchain with G-Cter in SUMO) linkage.

It belongs to the papillomaviridae E1 protein family. As to quaternary structure, can form hexamers. Interacts with E2 protein; this interaction increases E1 DNA binding specificity. Interacts with host DNA polymerase subunit POLA2. Interacts with host single stranded DNA-binding protein RPA1. Interacts with host TOP1; this interaction stimulates the enzymatic activity of TOP1. Phosphorylated. In terms of processing, sumoylated.

Its subcellular location is the host nucleus. The catalysed reaction is Couples ATP hydrolysis with the unwinding of duplex DNA by translocating in the 3'-5' direction.. It carries out the reaction ATP + H2O = ADP + phosphate + H(+). In terms of biological role, ATP-dependent DNA 3'-5' helicase required for initiation of viral DNA replication. It forms a complex with the viral E2 protein. The E1-E2 complex binds to the replication origin which contains binding sites for both proteins. During the initial step, a dimer of E1 interacts with a dimer of protein E2 leading to a complex that binds the viral origin of replication with high specificity. Then, a second dimer of E1 displaces the E2 dimer in an ATP-dependent manner to form the E1 tetramer. Following this, two E1 monomers are added to each half of the site, which results in the formation of two E1 trimers on the viral ori. Subsequently, two hexamers will be created. The double hexamer acts as a bi-directional helicase machinery and unwinds the viral DNA and then recruits the host DNA polymerase to start replication. The protein is Replication protein E1 of Pygmy chimpanzee papillomavirus type 1C (PCPV-1C).